Reading from the N-terminus, the 289-residue chain is Acetyl-coenzyme A carboxylase carboxyl transferase subunit beta (289 aa).

The CoA carboxyltransferase N-terminal domain maps to His23 to Leu289. Residues Cys27, Cys30, Cys46, and Cys49 each coordinate Zn(2+). Residues Cys27–Cys49 form a C4-type zinc finger.

Belongs to the AccD/PCCB family. As to quaternary structure, acetyl-CoA carboxylase is a heterohexamer composed of biotin carboxyl carrier protein (AccB), biotin carboxylase (AccC) and two subunits each of ACCase subunit alpha (AccA) and ACCase subunit beta (AccD). Zn(2+) is required as a cofactor.

The protein localises to the cytoplasm. The enzyme catalyses N(6)-carboxybiotinyl-L-lysyl-[protein] + acetyl-CoA = N(6)-biotinyl-L-lysyl-[protein] + malonyl-CoA. It participates in lipid metabolism; malonyl-CoA biosynthesis; malonyl-CoA from acetyl-CoA: step 1/1. Functionally, component of the acetyl coenzyme A carboxylase (ACC) complex. Biotin carboxylase (BC) catalyzes the carboxylation of biotin on its carrier protein (BCCP) and then the CO(2) group is transferred by the transcarboxylase to acetyl-CoA to form malonyl-CoA. The protein is Acetyl-coenzyme A carboxylase carboxyl transferase subunit beta of Wolinella succinogenes (strain ATCC 29543 / DSM 1740 / CCUG 13145 / JCM 31913 / LMG 7466 / NCTC 11488 / FDC 602W) (Vibrio succinogenes).